The following is a 134-amino-acid chain: ATP synthase epsilon chain (134 aa).

Belongs to the ATPase epsilon chain family. In terms of assembly, F-type ATPases have 2 components, CF(1) - the catalytic core - and CF(0) - the membrane proton channel. CF(1) has five subunits: alpha(3), beta(3), gamma(1), delta(1), epsilon(1). CF(0) has three main subunits: a, b and c.

Its subcellular location is the cellular thylakoid membrane. In terms of biological role, produces ATP from ADP in the presence of a proton gradient across the membrane. The chain is ATP synthase epsilon chain from Prochlorococcus marinus (strain AS9601).